We begin with the raw amino-acid sequence, 522 residues long: Amphoterin-induced protein 2 (522 aa).

The first 39 residues, 1–39 (MSLRVHTLPTLLGAVVRPGCRELLCLLMITVTVGPGASG), serve as a signal peptide directing secretion. The region spanning 40 to 68 (VCPTACICATDIVSCTNKNLSKVPGNLFR) is the LRRNT domain. The Extracellular segment spans residues 40–398 (VCPTACICAT…RSHAHEAFNT (359 aa)). 2 disulfides stabilise this stretch: C41-C47 and C45-C54. An N-linked (GlcNAc...) asparagine glycan is attached at N58. LRR repeat units lie at residues 69-90 (LIKR…WIPV), 94-115 (KLNT…SFST), 118-139 (NLKC…VFQE), 142-163 (VLEV…AFGG), 166-187 (QLQK…LYVG), and 193-214 (ELMF…HINL). N104 is a glycosylation site (N-linked (GlcNAc...) asparagine). The LRRCT domain maps to 228–284 (NPFVCDCSLYSLLVFWYRRHFSSVMDFKNDYTCRLWSDSRHSRQVLLLQDSFMNCSD). Cystine bridges form between C232–C260 and C234–C282. N281, N288, N345, N373, N381, and N384 each carry an N-linked (GlcNAc...) asparagine glycan. Residues 289 to 379 (GSFRALGFIH…RLLNETVDVT (91 aa)) enclose the Ig-like C2-type domain. Residues C310 and C363 are joined by a disulfide bond. A helical transmembrane segment spans residues 399 to 419 (AFTTLAACVASIVLVLLYLYL). The Cytoplasmic portion of the chain corresponds to 420 to 522 (TPCPCKCKTK…FSDTPFVAST (103 aa)). The tract at residues 501–522 (RGKSDSDSVNSVFSDTPFVAST) is disordered.

It belongs to the immunoglobulin superfamily. AMIGO family. As to quaternary structure, binds itself as well as AMIGO1 and AMIGO3. Highest levels in breast, ovary, cervix, and uterus. Lower levels in lung, colon, and rectum. Differentially expressed in 56% of thyroid, 57% of pancreatic and 45% of stomach cancers.

The protein resides in the cell membrane. It is found in the nucleus. Required for depolarization-dependent survival of cultured cerebellar granule neurons. May mediate homophilic as well as heterophilic cell-cell interaction with AMIGO1 or AMIGO3. May contribute to signal transduction through its intracellular domain. May be required for tumorigenesis of a subset of gastric adenocarcinomas. The protein is Amphoterin-induced protein 2 of Homo sapiens (Human).